The following is a 499-amino-acid chain: L-arabinose isomerase (499 aa).

4 residues coordinate Mn(2+): glutamate 306, glutamate 333, histidine 350, and histidine 449.

The protein belongs to the arabinose isomerase family. Mn(2+) is required as a cofactor.

The enzyme catalyses beta-L-arabinopyranose = L-ribulose. It functions in the pathway carbohydrate degradation; L-arabinose degradation via L-ribulose; D-xylulose 5-phosphate from L-arabinose (bacterial route): step 1/3. Catalyzes the conversion of L-arabinose to L-ribulose. The protein is L-arabinose isomerase of Aeromonas salmonicida (strain A449).